We begin with the raw amino-acid sequence, 282 residues long: NH(3)-dependent NAD(+) synthetase (282 aa).

51-58 (GISGGVDS) contributes to the ATP binding site. D57 is a binding site for Mg(2+). Position 148 (R148) interacts with deamido-NAD(+). Residue T168 participates in ATP binding. E173 contacts Mg(2+). Deamido-NAD(+) contacts are provided by K181 and D188. 2 residues coordinate ATP: K197 and T219. Deamido-NAD(+) is bound at residue 268–269 (HK).

It belongs to the NAD synthetase family. In terms of assembly, homodimer.

It carries out the reaction deamido-NAD(+) + NH4(+) + ATP = AMP + diphosphate + NAD(+) + H(+). Its pathway is cofactor biosynthesis; NAD(+) biosynthesis; NAD(+) from deamido-NAD(+) (ammonia route): step 1/1. Functionally, catalyzes the ATP-dependent amidation of deamido-NAD to form NAD. Uses ammonia as a nitrogen source. The chain is NH(3)-dependent NAD(+) synthetase from Burkholderia cenocepacia (strain HI2424).